A 189-amino-acid chain; its full sequence is Parkinson disease protein 7 homolog (189 aa).

The residue at position 2 (alanine 2) is an N-acetylalanine. S-palmitoyl cysteine attachment occurs at residues cysteine 46 and cysteine 53. Position 67 is a phosphotyrosine (tyrosine 67). Catalysis depends on cysteine 106, which acts as the Nucleophile. At cysteine 106 the chain carries Cysteine sulfinic acid (-SO2H); alternate. Cysteine 106 is lipidated: S-palmitoyl cysteine; alternate. Histidine 126 is an active-site residue. Lysine 130 is covalently cross-linked (Glycyl lysine isopeptide (Lys-Gly) (interchain with G-Cter in SUMO)). Lysine 148 carries the N6-acetyllysine modification. At lysine 182 the chain carries N6-succinyllysine.

The protein belongs to the peptidase C56 family. Homodimer. Binds EFCAB6/DJBP and PIAS2. Part of a ternary complex containing PARK7, EFCAB6/DJBP and AR. Interacts (via N-terminus) with OTUD7B. Interacts with BBS1, HIPK1, CLCF1 and MTERF. Forms a complex with PINK1 and PRKN. Interacts (via C-terminus) with NCF1; the interaction is enhanced by LPS and modulates NCF1 phosphorylation and membrane translocation. Interacts with NENF. Requires Deglycase activity does not require glutathione as a cofactor, however, glycated glutathione constitutes a PARK7 substrate. as cofactor. Post-translationally, sumoylated on Lys-130 by PIAS2 or PIAS4; which is essential for cell-growth promoting activity and transforming activity. Undergoes cleavage of a C-terminal peptide and subsequent activation of protease activity in response to oxidative stress.

It localises to the cell membrane. Its subcellular location is the cytoplasm. The protein localises to the nucleus. It is found in the membrane raft. The protein resides in the mitochondrion. It localises to the endoplasmic reticulum. It catalyses the reaction N(omega)-(1-hydroxy-2-oxopropyl)-L-arginyl-[protein] + H2O = lactate + L-arginyl-[protein] + H(+). The catalysed reaction is N(6)-(1-hydroxy-2-oxopropyl)-L-lysyl-[protein] + H2O = lactate + L-lysyl-[protein] + H(+). The enzyme catalyses S-(1-hydroxy-2-oxopropyl)-L-cysteinyl-[protein] + H2O = lactate + L-cysteinyl-[protein] + H(+). It carries out the reaction N(omega)-(1-hydroxy-2-oxoethyl)-L-arginyl-[protein] + H2O = L-arginyl-[protein] + glycolate + H(+). It catalyses the reaction N(6)-(1-hydroxy-2-oxoethyl)-L-lysyl-[protein] + H2O = glycolate + L-lysyl-[protein] + H(+). The catalysed reaction is S-(1-hydroxy-2-oxoethyl)-L-cysteinyl-[protein] + H2O = glycolate + L-cysteinyl-[protein] + H(+). The enzyme catalyses N(2)-(1-hydroxy-2-oxopropyl)-dGTP + H2O = lactate + dGTP + H(+). It carries out the reaction N(2)-(1-hydroxy-2-oxopropyl)-GTP + H2O = lactate + GTP + H(+). It catalyses the reaction N(2)-(1-hydroxy-2-oxopropyl)-GDP + H2O = lactate + GDP + H(+). The catalysed reaction is N(2)-(1-hydroxy-2-oxopropyl)-GMP + H2O = lactate + GMP + H(+). The enzyme catalyses N(2)-(1-hydroxy-2-oxoethyl)-dGTP + H2O = dGTP + glycolate + H(+). It carries out the reaction N(2)-(1-hydroxy-2-oxoethyl)-GTP + H2O = glycolate + GTP + H(+). It catalyses the reaction N(2)-(1-hydroxy-2-oxoethyl)-GDP + H2O = glycolate + GDP + H(+). The catalysed reaction is N(2)-(1-hydroxy-2-oxoethyl)-GMP + H2O = glycolate + GMP + H(+). The enzyme catalyses an N(2)-(1-hydroxy-2-oxopropyl)-guanosine in RNA + H2O = a guanosine in RNA + lactate + H(+). It carries out the reaction an N(2)-(1-hydroxy-2-oxopropyl)-2'-deoxyguanosine in DNA + H2O = a 2'-deoxyguanosine in DNA + lactate + H(+). It catalyses the reaction an N(2)-(1-hydroxy-2-oxoethyl)-guanosine in RNA + H2O = a guanosine in RNA + glycolate + H(+). The catalysed reaction is an N(2)-(1-hydroxy-2-oxoethyl)-2'-deoxyguanosine in DNA + H2O = a 2'-deoxyguanosine in DNA + glycolate + H(+). In terms of biological role, multifunctional protein with controversial molecular function which plays an important role in cell protection against oxidative stress and cell death acting as oxidative stress sensor and redox-sensitive chaperone and protease. It is involved in neuroprotective mechanisms like the stabilization of NFE2L2 and PINK1 proteins, male fertility as a positive regulator of androgen signaling pathway as well as cell growth and transformation through, for instance, the modulation of NF-kappa-B signaling pathway. Has been described as a protein and nucleotide deglycase that catalyzes the deglycation of the Maillard adducts formed between amino groups of proteins or nucleotides and reactive carbonyl groups of glyoxals. But this function is rebuted by other works. As a protein deglycase, repairs methylglyoxal- and glyoxal-glycated proteins, and releases repaired proteins and lactate or glycolate, respectively. Deglycates cysteine, arginine and lysine residues in proteins, and thus reactivates these proteins by reversing glycation by glyoxals. Acts on early glycation intermediates (hemithioacetals and aminocarbinols), preventing the formation of advanced glycation endproducts (AGE) that cause irreversible damage. Also functions as a nucleotide deglycase able to repair glycated guanine in the free nucleotide pool (GTP, GDP, GMP, dGTP) and in DNA and RNA. Is thus involved in a major nucleotide repair system named guanine glycation repair (GG repair), dedicated to reversing methylglyoxal and glyoxal damage via nucleotide sanitization and direct nucleic acid repair. Protects histones from adduction by methylglyoxal, controls the levels of methylglyoxal-derived argininine modifications on chromatin. Able to remove the glycations and restore histone 3, histone glycation disrupts both local and global chromatin architecture by altering histone-DNA interactions as well as histone acetylation and ubiquitination levels. Displays a very low glyoxalase activity that may reflect its deglycase activity. Eliminates hydrogen peroxide and protects cells against hydrogen peroxide-induced cell death. Required for correct mitochondrial morphology and function as well as for autophagy of dysfunctional mitochondria. Plays a role in regulating expression or stability of the mitochondrial uncoupling proteins SLC25A14 and SLC25A27 in dopaminergic neurons of the substantia nigra pars compacta and attenuates the oxidative stress induced by calcium entry into the neurons via L-type channels during pacemaking. Regulates astrocyte inflammatory responses, may modulate lipid rafts-dependent endocytosis in astrocytes and neuronal cells. In pancreatic islets, involved in the maintenance of mitochondrial reactive oxygen species (ROS) levels and glucose homeostasis in an age- and diet dependent manner. Protects pancreatic beta cells from cell death induced by inflammatory and cytotoxic setting. Binds to a number of mRNAs containing multiple copies of GG or CC motifs and partially inhibits their translation but dissociates following oxidative stress. Metal-binding protein able to bind copper as well as toxic mercury ions, enhances the cell protection mechanism against induced metal toxicity. In macrophages, interacts with the NADPH oxidase subunit NCF1 to direct NADPH oxidase-dependent ROS production, and protects against sepsis. The sequence is that of Parkinson disease protein 7 homolog from Chlorocebus aethiops (Green monkey).